The following is a 325-amino-acid chain: tRNA N6-adenosine threonylcarbamoyltransferase (325 aa).

2 residues coordinate Fe cation: His-111 and His-115. Substrate contacts are provided by residues 134–138 (LVSGG), Asp-167, Gly-180, Asp-184, and Asn-284. Residue Asp-312 coordinates Fe cation.

It belongs to the KAE1 / TsaD family. It depends on Fe(2+) as a cofactor.

It localises to the cytoplasm. The enzyme catalyses L-threonylcarbamoyladenylate + adenosine(37) in tRNA = N(6)-L-threonylcarbamoyladenosine(37) in tRNA + AMP + H(+). Functionally, required for the formation of a threonylcarbamoyl group on adenosine at position 37 (t(6)A37) in tRNAs that read codons beginning with adenine. Is involved in the transfer of the threonylcarbamoyl moiety of threonylcarbamoyl-AMP (TC-AMP) to the N6 group of A37, together with TsaE and TsaB. TsaD likely plays a direct catalytic role in this reaction. The sequence is that of tRNA N6-adenosine threonylcarbamoyltransferase from Trichodesmium erythraeum (strain IMS101).